A 401-amino-acid chain; its full sequence is Keratin-associated protein 10-4 (401 aa).

Tandem repeats lie at residues 36–40 (CCEPP), 41–45 (CCAPS), 46–50 (CCAPA), 67–71 (CCPVT), 89–93 (CCQQS), 99–103 (CCASS), 109–113 (CCVPV), 114–118 (CCKTV), 119–123 (CCKPV), 124–128 (CCVPV), 129–133 (CCGDS), 135–139 (CCQQS), 145–149 (CCTSS), 155–159 (CCVPI), 160–164 (CCKPV), 172–176 (CCQQS), 186–190 (CCQAV), 208–212 (CCQQS), 218–222 (CCTSS), 228–232 (CCVPV), 233–237 (CCKTV), 238–242 (CCKPV), 250–254 (CCQQS), 270–274 (CCVPV), 275–279 (CCKPV), 280–284 (CCKPV), 297–301 (CCQQS), 307–311 (CCTSS), 317–321 (CCVPV), 322–326 (CCKPV), 339–343 (CCQQS), 349–353 (CCTTS), 354–358 (CCRPS), 373–377 (CCVPV), and 391–395 (CCRPA). Residues 36-395 (CCEPPCCAPS…SCQPSCCRPA (360 aa)) are 36 X 5 AA repeats of C-C-X(3).

The protein belongs to the KRTAP type 10 family. As to quaternary structure, interacts with hair keratins. Restricted to hair root, not detected in any other tissues.

In terms of biological role, in the hair cortex, hair keratin intermediate filaments are embedded in an interfilamentous matrix, consisting of hair keratin-associated proteins (KRTAP), which are essential for the formation of a rigid and resistant hair shaft through their extensive disulfide bond cross-linking with abundant cysteine residues of hair keratins. The matrix proteins include the high-sulfur and high-glycine-tyrosine keratins. The chain is Keratin-associated protein 10-4 (KRTAP10-4) from Homo sapiens (Human).